The chain runs to 700 residues: MANKREFPLDRTRNIGIMAHIDAGKTTTTERILYYTGKIHKIGETHEGASQMDWMPQEQERGITITSAATTAFWKDHRVNIIDTPGHVDFTIEVERSLRVLDGAITVLDAQSGVEPQTENVWRQATTYGVPRLVFVNKMDKIGADFDYSMTTLHDRLQANAHAVQMPIGAEDKFEGVIDLIEMKADLYDEDELGTKWDTVDVPDDYKEAAQKAHNDLIEAVADVDDGIMDKYLEGEEISNAELKAAIRKATINLEFYPVLAGSAFKNKGVQMLLDAVIDYLPSPLDVRPYHATDPDTGDAVELTAGDDKPFAALAFKVATDPFVGRLTYIRVYSGTLEAGSYVLNATKDNRERVGRLLQMHSNHREEIPEVFSGDIAAAIGLKNTTTGDSLTDVDHPLILESLDVPDPVIQVSIEPDSKEDQDKLDVGLQKLSEEDPTFKAETNPETGETLIAGMGELHLDIMVDRLKREFKVAAKVGEPQVAYRETFTKETSAQGKFVRQSGGKGQYGDVWIEFTPNEEGKGFEFENAIVGGVVPREYIPAVEQGLKEAMANGVLAGYPLIDVKAKLYDGSYHEVDSSEAAFKVAASMALKNASKSAGAVILEPIMHVEVVAPEEYLGDVMGQITARRGRVEGMEARGNAQLVNSMVPLAEMFGYATTLRSATQGRGTFTMTFDHYEAVPKSIQAEIIKKNGGGVATKD.

The region spanning Asp-10–Leu-285 is the tr-type G domain. GTP is bound by residues Ala-19–Thr-26, Asp-83–His-87, and Asn-137–Asp-140.

It belongs to the TRAFAC class translation factor GTPase superfamily. Classic translation factor GTPase family. EF-G/EF-2 subfamily.

The protein resides in the cytoplasm. Catalyzes the GTP-dependent ribosomal translocation step during translation elongation. During this step, the ribosome changes from the pre-translocational (PRE) to the post-translocational (POST) state as the newly formed A-site-bound peptidyl-tRNA and P-site-bound deacylated tRNA move to the P and E sites, respectively. Catalyzes the coordinated movement of the two tRNA molecules, the mRNA and conformational changes in the ribosome. The chain is Elongation factor G from Lacticaseibacillus casei (strain BL23) (Lactobacillus casei).